A 140-amino-acid polypeptide reads, in one-letter code: Nucleoside diphosphate kinase (140 aa).

Positions 11, 59, 87, 93, 104, and 114 each coordinate ATP. Catalysis depends on His117, which acts as the Pros-phosphohistidine intermediate.

This sequence belongs to the NDK family. Homotetramer. Mg(2+) is required as a cofactor.

It is found in the cytoplasm. The catalysed reaction is a 2'-deoxyribonucleoside 5'-diphosphate + ATP = a 2'-deoxyribonucleoside 5'-triphosphate + ADP. The enzyme catalyses a ribonucleoside 5'-diphosphate + ATP = a ribonucleoside 5'-triphosphate + ADP. Functionally, major role in the synthesis of nucleoside triphosphates other than ATP. The ATP gamma phosphate is transferred to the NDP beta phosphate via a ping-pong mechanism, using a phosphorylated active-site intermediate. This chain is Nucleoside diphosphate kinase, found in Paracoccus denitrificans (strain Pd 1222).